We begin with the raw amino-acid sequence, 710 residues long: Secretin OutD (710 aa).

An N-terminal signal peptide occupies residues 1–27 (MLGKGIKKSWGWLGLTVLLLGSPCGWA). An N0 region spans residues 28–105 (AEFSASFKGT…DNGVLKVIRS (78 aa)). The N1 stretch occupies residues 123–190 (IGDELVTRVV…DIVNTVDKTG (68 aa)). Residues 192–262 (REMVTVPLTY…VEMIRQLDRK (71 aa)) are N2. The tract at residues 288–399 (GNGTSGNRNS…INQLDIRRPQ (112 aa)) is N3. The interval 289–353 (NGTSGNRNSS…AFGSTSSSGG (65 aa)) is disordered. Residues 401–648 (LVEAIIAEIQ…MLFLRPTIIR (248 aa)) are secretin. The tract at residues 691 to 710 (TYTFRQVQSSISDFYKPEGR) is s domain.

This sequence belongs to the bacterial secretin family. GSP D subfamily. In terms of assembly, forms a cylindrical channel with 15 subunits. Interacts with pilotin OutS.

The protein localises to the cell outer membrane. Functionally, involved in a type II secretion system (T2SS, formerly general secretion pathway, GSP) for the export of proteins. Required for the translocation of the multiple pectic enzymes. This subunit forms the outer membrane channel. In Dickeya dadantii (strain 3937) (Erwinia chrysanthemi (strain 3937)), this protein is Secretin OutD (outD).